A 664-amino-acid chain; its full sequence is MANFKMVSPFKAAGDQVKAIENIAKSFGEGKNKITLVGVTGSGKTFTMAEVITRVKKPTLILSHNKTLAAQLFREFKEFFPENAVEYFVSYYDYYQPEAYVPSSDTFIEKDMSMNEEIDKLRLRATSSLLERDDVIIVSSVSCIYGLGSPEDYMNSVVMLQVGDKIDRDQIIRKFLHIQYARNDIDFSRGNFRVRGDTIEIMPSYQEEGIRIELFGDEIDGLSKIDPLTGKVKIKLDRVVVYPAKHFITSGPKIKDAMEKIKEEMAAQKEYFLKQGKHLEAERIESRTNYDMEMLLELGYCSGIENYSRHLTGRAEGERPACLLDYFPGKDFLLIIDESHVTLPQIGGMYAGDRSRKQTLVEFGFRLPSALDNRPLNFTEFEAMTPRTLYVSATPDQNELNKSEAVFEQIIRPTGLLDPVVEVRPTTNQIEDLLNEIRLRINQKERVLITTLTKKMSEDLTDYYKEVGLKIAYLHSEIDTIERTEIIRDLRKGVYDCIVGINLLREGLDIPEVSLVAILDADKEGFLRNYKSLVQTIGRAARNVNGKAILYADRMTDSIKKAMSETERRRLIQEAHNEKMGITPQTIQKEIHDILPREMAEEDSKEEALKDLEKEFTLKKYKTKDKLREALKREMLRYANDMDFEKAAMFRDKMLALGPDKIET.

Positions 25-182 (KSFGEGKNKI…RKFLHIQYAR (158 aa)) constitute a Helicase ATP-binding domain. Residue 38–45 (GVTGSGKT) coordinates ATP. Residues 91–114 (YYDYYQPEAYVPSSDTFIEKDMSM) carry the Beta-hairpin motif. One can recognise a Helicase C-terminal domain in the interval 429 to 595 (QIEDLLNEIR…TIQKEIHDIL (167 aa)). Residues 625 to 660 (DKLREALKREMLRYANDMDFEKAAMFRDKMLALGPD) form the UVR domain.

It belongs to the UvrB family. As to quaternary structure, forms a heterotetramer with UvrA during the search for lesions. Interacts with UvrC in an incision complex.

The protein localises to the cytoplasm. Functionally, the UvrABC repair system catalyzes the recognition and processing of DNA lesions. A damage recognition complex composed of 2 UvrA and 2 UvrB subunits scans DNA for abnormalities. Upon binding of the UvrA(2)B(2) complex to a putative damaged site, the DNA wraps around one UvrB monomer. DNA wrap is dependent on ATP binding by UvrB and probably causes local melting of the DNA helix, facilitating insertion of UvrB beta-hairpin between the DNA strands. Then UvrB probes one DNA strand for the presence of a lesion. If a lesion is found the UvrA subunits dissociate and the UvrB-DNA preincision complex is formed. This complex is subsequently bound by UvrC and the second UvrB is released. If no lesion is found, the DNA wraps around the other UvrB subunit that will check the other stand for damage. The protein is UvrABC system protein B of Leptospira biflexa serovar Patoc (strain Patoc 1 / Ames).